The following is a 195-amino-acid chain: Probable WRKY transcription factor 56 (195 aa).

The segment covering 1–10 (MEGVDNTNPM) has biased composition (polar residues). 2 disordered regions span residues 1–20 (MEGV…ENNN) and 70–93 (EMGG…KGKG). A DNA-binding region (WRKY) is located at residues 108–173 (SDDDVLDDGY…YEGVHNHPCE (66 aa)).

The protein belongs to the WRKY group II-c family.

It localises to the nucleus. Its function is as follows. Transcription factor. Interacts specifically with the W box (5'-(T)TGAC[CT]-3'), a frequently occurring elicitor-responsive cis-acting element. The polypeptide is Probable WRKY transcription factor 56 (WRKY56) (Arabidopsis thaliana (Mouse-ear cress)).